The chain runs to 455 residues: Rhodopsin (455 aa).

Over 1–34 (MVESTTLVNQTWWYNPTVDIHPHWAKFDPIPDAV) the chain is Extracellular. The N-linked (GlcNAc...) asparagine glycan is linked to N9. The helical transmembrane segment at 35-59 (YYSVGIFIGVVGIIGILGNGVVIYL) threads the bilayer. Topologically, residues 60–71 (FSKTKSLQTPAN) are cytoplasmic. The helical transmembrane segment at 72-98 (MFIINLAMSDLSFSAINGFPLKTISAF) threads the bilayer. Topologically, residues 99 to 110 (MKKWIFGKVACQ) are extracellular. C109 and C187 are oxidised to a cystine. A helical transmembrane segment spans residues 111–132 (LYGLLGGIFGFMSINTMAMISI). Residues 133–135 (DRY) carry the 'Ionic lock' involved in activated form stabilization motif. Topologically, residues 133–152 (DRYNVIGRPMAASKKMSHRR) are cytoplasmic. The chain crosses the membrane as a helical span at residues 153-173 (AFLMIIFVWMWSIVWSVGPVF). Over 174-200 (NWGAYVPEGILTSCSFDYLSTDPSTRS) the chain is Extracellular. A helical membrane pass occupies residues 201–225 (FILCMYFCGFMLPIIIIAFCYFNIV). Topologically, residues 226-262 (MSVSNHEKEMAAMAKRLNAKELRKAQAGASAEMKLAK) are cytoplasmic. A helical transmembrane segment spans residues 263 to 284 (ISMVIITQFMLSWSPYAIIALL). At 285-294 (AQFGPAEWVT) the chain is on the extracellular side. Residues 295-316 (PYAAELPVLFAKASAIHNPIVY) form a helical membrane-spanning segment. At K306 the chain carries N6-(retinylidene)lysine. Residues 317–455 (SVSHPKFREA…QGVDNQAYQA (139 aa)) are Cytoplasmic-facing. 2 S-palmitoyl cysteine lipidation sites follow: C337 and C338. Low complexity predominate over residues 378–387 (QKMQAQQAAY). Residues 378–455 (QKMQAQQAAY…QGVDNQAYQA (78 aa)) are disordered. The span at 388–433 (QPPPPPQGYPPQGYPPQGAYPPPQGYPPQGYPPQGYPPQGYPPQGA) shows a compositional bias: pro residues. A run of 6 repeats spans residues 395-399 (GYPPQ), 400-404 (GYPPQ), 412-416 (GYPPQ), 417-421 (GYPPQ), 422-426 (GYPPQ), and 427-431 (GYPPQ). The 6 X 5 AA repeats of G-Y-P-P-Q stretch occupies residues 395-431 (GYPPQGYPPQGAYPPPQGYPPQGYPPQGYPPQGYPPQ).

This sequence belongs to the G-protein coupled receptor 1 family. Opsin subfamily. Post-translationally, contains one covalently linked retinal chromophore. Upon light absorption, the covalently bound 11-cis-retinal is converted to all-trans-retinal. After hydrolysis of the Schiff base and release of the covalently bound all-trans-retinal, active rhodopsin is regenerated by binding of a fresh molecule of 11-cis-retinal.

Its subcellular location is the cell projection. The protein resides in the rhabdomere membrane. In terms of biological role, photoreceptor required for image-forming vision at low light intensity. Light-induced isomerization of 11-cis to all-trans retinal triggers a conformational change that activates signaling via G-proteins. Signaling mediates the activation of phospholipase C. Subsequent receptor phosphorylation mediates displacement of the bound G-protein alpha subunit by arrestin and terminates signaling. This is Rhodopsin (RHO) from Enteroctopus dofleini (North Pacific giant octopus).